Here is a 332-residue protein sequence, read N- to C-terminus: UDP-galactose/UDP-glucose transporter 1 (332 aa).

The next 8 helical transmembrane spans lie at 11–31 (ILLL…QGVL), 49–69 (HLAF…YIMI), 80–100 (APWW…AMGI), 112–132 (VLAK…VYGI), 135–155 (TFPE…FALL), 206–226 (IMLG…FGLP), 252–272 (ICGA…GSLA), and 301–317 (WGCV…QIYL). A Di-lysine motif motif is present at residues 327–332 (KKKQKS).

The protein belongs to the nucleotide-sugar transporter family. UDP-galactose:UMP antiporter (TC 2.A.7.11) subfamily.

Its subcellular location is the endoplasmic reticulum membrane. In terms of biological role, essential sugar transporter required for the transport of UDP-galactose and UDP-glucose from the cytoplasm into the Golgi and the endoplasmic reticulum, to ensure quality control of protein folding. Essential for pollen development and involved in embryo sac progress. The sequence is that of UDP-galactose/UDP-glucose transporter 1 from Arabidopsis thaliana (Mouse-ear cress).